The sequence spans 355 residues: MPVLHNRISNQKLKEKMLAETQERQTLSFYKYFALDNPSMFRDKLYTQWNQLSVFGRVYIAKEGINAQISVPIDHYNDFKASLFNAHPALDQIRLNTALEDNGRSFWVLRMKVRQRIVADGIEDETFNPAHTGQYLKAHEVNEMIKDPDALFVDMRNHYEYEVGHFKNAIKVPSDTFREQLPMAVDMLKEDKEKKMVLYCTGGIRCEKASAYLLHHGFKNVYHVEGGIIEYVRTAKKKDLPLHFIGKNFVFDERMGERVSEEVIAHCHQCEQFCDTHVNCHNSACHLLFIQCAICSEKFSGCCSAICQEELELSPEEQRLRRSARGNKIKIFNKSKDVLETIMNKSIIDQGNKEG.

The 95-residue stretch at 146-240 folds into the Rhodanese domain; it reads KDPDALFVDM…YVRTAKKKDL (95 aa). Cys200 acts as the Cysteine persulfide intermediate in catalysis.

It belongs to the TrhO family.

The catalysed reaction is uridine(34) in tRNA + AH2 + O2 = 5-hydroxyuridine(34) in tRNA + A + H2O. Catalyzes oxygen-dependent 5-hydroxyuridine (ho5U) modification at position 34 in tRNAs. This Hamiltonella defensa subsp. Acyrthosiphon pisum (strain 5AT) protein is tRNA uridine(34) hydroxylase.